The chain runs to 572 residues: Dihydroxy-acid dehydratase (572 aa).

Cys54 contacts [2Fe-2S] cluster. Asp86 lines the Mg(2+) pocket. Cys127 provides a ligand contact to [2Fe-2S] cluster. The Mg(2+) site is built by Asp128 and Lys129. Residue Lys129 is modified to N6-carboxylysine. Cys199 serves as a coordination point for [2Fe-2S] cluster. Glu449 contributes to the Mg(2+) binding site. Ser475 serves as the catalytic Proton acceptor.

It belongs to the IlvD/Edd family. As to quaternary structure, homodimer. [2Fe-2S] cluster is required as a cofactor. It depends on Mg(2+) as a cofactor.

The enzyme catalyses (2R)-2,3-dihydroxy-3-methylbutanoate = 3-methyl-2-oxobutanoate + H2O. It catalyses the reaction (2R,3R)-2,3-dihydroxy-3-methylpentanoate = (S)-3-methyl-2-oxopentanoate + H2O. The protein operates within amino-acid biosynthesis; L-isoleucine biosynthesis; L-isoleucine from 2-oxobutanoate: step 3/4. It participates in amino-acid biosynthesis; L-valine biosynthesis; L-valine from pyruvate: step 3/4. Functionally, functions in the biosynthesis of branched-chain amino acids. Catalyzes the dehydration of (2R,3R)-2,3-dihydroxy-3-methylpentanoate (2,3-dihydroxy-3-methylvalerate) into 2-oxo-3-methylpentanoate (2-oxo-3-methylvalerate) and of (2R)-2,3-dihydroxy-3-methylbutanoate (2,3-dihydroxyisovalerate) into 2-oxo-3-methylbutanoate (2-oxoisovalerate), the penultimate precursor to L-isoleucine and L-valine, respectively. This chain is Dihydroxy-acid dehydratase, found in Pelagibacter ubique (strain HTCC1062).